The chain runs to 493 residues: Probable malate:quinone oxidoreductase (493 aa).

Belongs to the MQO family. FAD serves as cofactor.

It catalyses the reaction (S)-malate + a quinone = a quinol + oxaloacetate. It participates in carbohydrate metabolism; tricarboxylic acid cycle; oxaloacetate from (S)-malate (quinone route): step 1/1. The protein is Probable malate:quinone oxidoreductase of Lysinibacillus sphaericus (strain C3-41).